The sequence spans 204 residues: dTTP/UTP pyrophosphatase (204 aa).

The active-site Proton acceptor is the D68.

It belongs to the Maf family. YhdE subfamily. The cofactor is a divalent metal cation.

Its subcellular location is the cytoplasm. It catalyses the reaction dTTP + H2O = dTMP + diphosphate + H(+). It carries out the reaction UTP + H2O = UMP + diphosphate + H(+). In terms of biological role, nucleoside triphosphate pyrophosphatase that hydrolyzes dTTP and UTP. May have a dual role in cell division arrest and in preventing the incorporation of modified nucleotides into cellular nucleic acids. This Thermotoga maritima (strain ATCC 43589 / DSM 3109 / JCM 10099 / NBRC 100826 / MSB8) protein is dTTP/UTP pyrophosphatase.